The primary structure comprises 186 residues: Ribosome-recycling factor (186 aa).

The protein belongs to the RRF family.

It localises to the cytoplasm. Functionally, responsible for the release of ribosomes from messenger RNA at the termination of protein biosynthesis. May increase the efficiency of translation by recycling ribosomes from one round of translation to another. This chain is Ribosome-recycling factor, found in Limosilactobacillus reuteri (Lactobacillus reuteri).